A 219-amino-acid polypeptide reads, in one-letter code: NAD(P)H-quinone oxidoreductase subunit I (219 aa).

4Fe-4S ferredoxin-type domains lie at 55–84 and 95–124; these read GRIH…VDWV and RNYS…MTEE. Residues Cys64, Cys67, Cys70, Cys74, Cys104, Cys107, Cys110, and Cys114 each contribute to the [4Fe-4S] cluster site. The interval 192-219 is disordered; that stretch reads LKAAGSMKAAEDERESSSSASNMEESAG. The segment covering 208–219 has biased composition (low complexity); it reads SSSASNMEESAG.

This sequence belongs to the complex I 23 kDa subunit family. As to quaternary structure, NDH-1 is composed of at least 11 different subunits. Requires [4Fe-4S] cluster as cofactor.

The protein resides in the cellular thylakoid membrane. The enzyme catalyses a plastoquinone + NADH + (n+1) H(+)(in) = a plastoquinol + NAD(+) + n H(+)(out). The catalysed reaction is a plastoquinone + NADPH + (n+1) H(+)(in) = a plastoquinol + NADP(+) + n H(+)(out). In terms of biological role, NDH-1 shuttles electrons from an unknown electron donor, via FMN and iron-sulfur (Fe-S) centers, to quinones in the respiratory and/or the photosynthetic chain. The immediate electron acceptor for the enzyme in this species is believed to be plastoquinone. Couples the redox reaction to proton translocation, and thus conserves the redox energy in a proton gradient. In Synechococcus sp. (strain CC9311), this protein is NAD(P)H-quinone oxidoreductase subunit I.